The following is a 503-amino-acid chain: ATP synthase subunit alpha (503 aa).

169 to 176 (GDRKTGKT) contributes to the ATP binding site.

It belongs to the ATPase alpha/beta chains family. F-type ATPases have 2 components, CF(1) - the catalytic core - and CF(0) - the membrane proton channel. CF(1) has five subunits: alpha(3), beta(3), gamma(1), delta(1), epsilon(1). CF(0) has three main subunits: a(1), b(2) and c(9-12). The alpha and beta chains form an alternating ring which encloses part of the gamma chain. CF(1) is attached to CF(0) by a central stalk formed by the gamma and epsilon chains, while a peripheral stalk is formed by the delta and b chains.

The protein localises to the cell membrane. It catalyses the reaction ATP + H2O + 4 H(+)(in) = ADP + phosphate + 5 H(+)(out). In terms of biological role, produces ATP from ADP in the presence of a proton gradient across the membrane. The alpha chain is a regulatory subunit. The chain is ATP synthase subunit alpha from Ligilactobacillus salivarius (strain UCC118) (Lactobacillus salivarius).